The following is a 493-amino-acid chain: Rho guanine nucleotide exchange factor 9 (493 aa).

The SH3 domain maps to 15 to 74; the sequence is DSIVSAEAVWDHVTMANRGVAFKAGDVIKVLDASNKDWWWGQIDDEEGWFPASFVRLWVN. Residues 107 to 117 form an interaction with GPHN region; it reads RDQMRANVINE. One can recognise a DH domain in the interval 110–294; it reads MRANVINEIM…RNVTQQINER (185 aa). Residues 325–432 enclose the PH domain; the sequence is ELIYTGEMAW…WLRAFREERK (108 aa). The interval 453–473 is disordered; it reads AMTVRKASKQKGRVGEEENQS.

In terms of assembly, interacts with GPHN. In terms of tissue distribution, detected in brain, throughout the gray matter. Detected at low levels in heart and skeletal muscle.

It is found in the cytoplasm. Its subcellular location is the postsynaptic density. Acts as a guanine nucleotide exchange factor (GEF) for CDC42. Promotes formation of GPHN clusters. In Rattus norvegicus (Rat), this protein is Rho guanine nucleotide exchange factor 9 (Arhgef9).